The primary structure comprises 138 residues: Probable lactoylglutathione lyase (138 aa).

A VOC domain is found at R5–N129. H8 contributes to the Ni(2+) binding site. R12 lines the substrate pocket. E59 provides a ligand contact to Ni(2+). Substrate-binding residues include N63 and H77. H77 and E125 together coordinate Ni(2+). E125 (proton donor/acceptor) is an active-site residue.

It belongs to the glyoxalase I family. Ni(2+) is required as a cofactor.

It catalyses the reaction (R)-S-lactoylglutathione = methylglyoxal + glutathione. The protein operates within secondary metabolite metabolism; methylglyoxal degradation; (R)-lactate from methylglyoxal: step 1/2. Catalyzes the conversion of hemimercaptal, formed from methylglyoxal and glutathione, to S-lactoylglutathione. The sequence is that of Probable lactoylglutathione lyase (gloA) from Vibrio parahaemolyticus serotype O3:K6 (strain RIMD 2210633).